Consider the following 327-residue polypeptide: Meiotic coiled-coil protein 6 (327 aa).

Residues 66–188 adopt a coiled-coil conformation; the sequence is DAFERDSTQR…TETKEMNKIK (123 aa). The span at 175–199 shows a compositional bias: basic and acidic residues; that stretch reads RRMETETKEMNKIKPKNDSESDRFK. A disordered region spans residues 175-234; sequence RRMETETKEMNKIKPKNDSESDRFKRNSQSLSQQSPLLDVHSPDNSNHRTMLNINNSSPI. The span at 202 to 212 shows a compositional bias: low complexity; that stretch reads SQSLSQQSPLL. Residues 217–232 are compositionally biased toward polar residues; it reads PDNSNHRTMLNINNSS. Residues 243 to 297 adopt a coiled-coil conformation; the sequence is NEVKNRISRLQKTFADLENQHHSFQQICQTLRKRLENDSSTTKQRLSKLEEIIRN.

Interacts with alp4, kms1 and mbo1.

Its subcellular location is the nucleus. It localises to the cytoplasm. The protein localises to the cytoskeleton. It is found in the microtubule organizing center. The protein resides in the spindle pole body. Its function is as follows. Has a role in meiotic nuclear oscillation and recombination. Required to remodel astral microtubules into the 'horsetail' astral array maintaining the 'horsetail' nuclear movement. Promotes homologous paring of chromosomes during this movement. This chain is Meiotic coiled-coil protein 6 (mcp6), found in Schizosaccharomyces pombe (strain 972 / ATCC 24843) (Fission yeast).